Consider the following 694-residue polypeptide: Glycine--tRNA ligase beta subunit (694 aa).

This sequence belongs to the class-II aminoacyl-tRNA synthetase family. Tetramer of two alpha and two beta subunits.

The protein localises to the cytoplasm. It carries out the reaction tRNA(Gly) + glycine + ATP = glycyl-tRNA(Gly) + AMP + diphosphate. This Moorella thermoacetica (strain ATCC 39073 / JCM 9320) protein is Glycine--tRNA ligase beta subunit.